The chain runs to 1257 residues: Phosphatidylinositol 3,4,5-trisphosphate 5-phosphatase 2 (1257 aa).

Positions 21-117 constitute an SH2 domain; it reads WYHRDLSRAA…GLVCALLLPV (97 aa). The segment covering 119–132 has biased composition (basic and acidic residues); the sequence is GEREPDPPDDRDAS. The segment at 119–181 is disordered; the sequence is GEREPDPPDD…ESTPNGLSTV (63 aa). Position 132 is a phosphoserine (Ser-132). Over residues 156–166 the composition is skewed to pro residues; sequence PSSPLPTPETP. Phosphothreonine is present on Thr-165. A phosphoserine mark is found at Ser-241 and Ser-353. Residue Tyr-887 is modified to Phosphotyrosine. Ser-891 carries the post-translational modification Phosphoserine. A disordered region spans residues 897 to 986; sequence TGAKSKVPSV…PPKNSFNNPA (90 aa). The span at 939-951 shows a compositional bias: pro residues; that stretch reads PPPTGRPPAPPRA. The SH3-binding motif lies at 945-950; sequence PPAPPR. Residues 952-966 show a composition bias toward basic and acidic residues; it reads VPREEPLNPRLKSEG. The NPXY motif signature appears at 984–987; sequence NPAY. Tyr-987 is subject to Phosphotyrosine. Over residues 999–1008 the composition is skewed to low complexity; the sequence is PLEPPSLARA. The tract at residues 999-1119 is disordered; that stretch reads PLEPPSLARA…FLGEVASGDD (121 aa). 2 stretches are compositionally biased toward pro residues: residues 1049 to 1060 and 1088 to 1104; these read LPPPDFPPPPLP and GPPP…PPGT. Phosphoserine is present on Ser-1132. A disordered region spans residues 1134 to 1196; that stretch reads VDYAPGPGRS…PQGGRASGLG (63 aa). A phosphotyrosine mark is found at Tyr-1136 and Tyr-1161. Residues 1195-1257 enclose the SAM domain; that stretch reads LGEAGMGAWL…LLLDTLQLSK (63 aa). Residue Ser-1256 is modified to Phosphoserine.

It belongs to the inositol 1,4,5-trisphosphate 5-phosphatase family. As to quaternary structure, interacts with tyrosine phosphorylated form of SHC1. Interacts with EGFR. Upon stimulation by the EGF signaling pathway, it forms a complex with SHC1 and EGFR. Interacts with cytoskeletal protein SORBS3/vinexin, promoting its localization to the periphery of cells. Forms a complex with filamin (FLNA or FLNB), actin, GPIb (GP1BA or GP1BB) that regulates cortical and submembraneous actin. Interacts with c-Met/MET, when c-Met/MET is phosphorylated on 'Tyr-1356'. Interacts with p130Cas/BCAR1. Interacts with CENTD3/ARAP3 via its SAM domain. Interacts with c-Cbl/CBL and CAP/SORBS1. Interacts with activated EPHA2 receptor. Interacts with receptors FCGR2A. Interacts with FCGR2B. Interacts with tyrosine kinase ABL1. Interacts with tyrosine kinase TEC. Interacts with CSF1R. Interacts (via N-terminus) with SH3YL1 (via SH3 domain). Interacts (via SH2 domain) with tyrosine phosphorylated KLRC1 (via ITIM). Interacts with NEDD9/HEF1. In terms of processing, tyrosine phosphorylated by the members of the SRC family after exposure to a diverse array of extracellular stimuli such as insulin, growth factors such as EGF or PDGF, chemokines, integrin ligands and hypertonic and oxidative stress. May be phosphorylated upon IgG receptor FCGR2B-binding. Phosphorylated at Tyr-987 following cell attachment and spreading. Phosphorylated at Tyr-1161 following EGF signaling pathway stimulation. As to expression, widely expressed.

The protein resides in the cytoplasm. It is found in the cytosol. It localises to the cytoskeleton. Its subcellular location is the membrane. The protein localises to the cell projection. The protein resides in the filopodium. It is found in the lamellipodium. It localises to the basal cell membrane. Its subcellular location is the nucleus. The protein localises to the nucleus speckle. The protein resides in the spindle pole. The catalysed reaction is a 1,2-diacyl-sn-glycero-3-phospho-(1D-myo-inositol-3,4,5-trisphosphate) + H2O = a 1,2-diacyl-sn-glycero-3-phospho-(1D-myo-inositol-3,4-bisphosphate) + phosphate. The enzyme catalyses 1,2-dioctanoyl-sn-glycero-3-phospho-(1D-myo-inositol-3,4,5-trisphosphate) + H2O = 1,2-dioctanoyl-sn-glycero-3-phospho-(1D-myo-inositol-3,4-bisphosphate) + phosphate. It carries out the reaction 1,2-dihexadecanoyl-sn-glycero-3-phospho-(1D-myo-inositol-3,4,5-trisphosphate) + H2O = 1,2-dihexadecanoyl-sn-glycero-3-phospho-(1D-myo-inositol-3,4-bisphosphate) + phosphate. With respect to regulation, activated upon translocation to the sites of synthesis of PtdIns(3,4,5)P3 in the membrane. Enzymatic activity is enhanced in the presence of phosphatidylserine. Functionally, phosphatidylinositol (PtdIns) phosphatase that specifically hydrolyzes the 5-phosphate of phosphatidylinositol-3,4,5-trisphosphate (PtdIns(3,4,5)P3) to produce PtdIns(3,4)P2, thereby negatively regulating the PI3K (phosphoinositide 3-kinase) pathways. Required for correct mitotic spindle orientation and therefore progression of mitosis. Plays a central role in regulation of PI3K-dependent insulin signaling, although the precise molecular mechanisms and signaling pathways remain unclear. While overexpression reduces both insulin-stimulated MAP kinase and Akt activation, its absence does not affect insulin signaling or GLUT4 trafficking. Confers resistance to dietary obesity. May act by regulating AKT2, but not AKT1, phosphorylation at the plasma membrane. Part of a signaling pathway that regulates actin cytoskeleton remodeling. Required for the maintenance and dynamic remodeling of actin structures as well as in endocytosis, having a major impact on ligand-induced EGFR internalization and degradation. Participates in regulation of cortical and submembraneous actin by hydrolyzing PtdIns(3,4,5)P3 thereby regulating membrane ruffling. Regulates cell adhesion and cell spreading. Required for HGF-mediated lamellipodium formation, cell scattering and spreading. Acts as a negative regulator of EPHA2 receptor endocytosis by inhibiting via PI3K-dependent Rac1 activation. Acts as a regulator of neuritogenesis by regulating PtdIns(3,4,5)P3 level and is required to form an initial protrusive pattern, and later, maintain proper neurite outgrowth. Acts as a negative regulator of the FC-gamma-RIIA receptor (FCGR2A). Mediates signaling from the FC-gamma-RIIB receptor (FCGR2B), playing a central role in terminating signal transduction from activating immune/hematopoietic cell receptor systems. Upon stimulation by EGF, it is recruited by EGFR and dephosphorylates PtdIns(3,4,5)P3. Plays a negative role in regulating the PI3K-PKB pathway, possibly by inhibiting PKB activity. Down-regulates Fc-gamma-R-mediated phagocytosis in macrophages independently of INPP5D/SHIP1. In macrophages, down-regulates NF-kappa-B-dependent gene transcription by regulating macrophage colony-stimulating factor (M-CSF)-induced signaling. Plays a role in the localization of AURKA and NEDD9/HEF1 to the basolateral membrane at interphase in polarized cysts, thereby mediates cell cycle homeostasis, cell polarization and cilia assembly. Additionally promotion of cilia growth is also facilitated by hydrolysis of (PtdIns(3,4,5)P3) to PtdIns(3,4)P2. Promotes formation of apical membrane-initiation sites during the initial stages of lumen formation via Rho family-induced actin filament organization and CTNNB1 localization to cell-cell contacts. May also hydrolyze PtdIns(1,3,4,5)P4, and could thus affect the levels of the higher inositol polyphosphates like InsP6. Involved in endochondral ossification. The chain is Phosphatidylinositol 3,4,5-trisphosphate 5-phosphatase 2 from Mus musculus (Mouse).